The chain runs to 114 residues: Transmembrane protein 256 homolog (114 aa).

Positions 1 to 25 (MAAGRVWGRLGAVSGALAVTAGAYG) are cleaved as a signal peptide. Over 26–64 (AHGFRRSDRDEYLKELFETGNRYHFLHSLALLAVPHCRR) the chain is Extracellular. A helical membrane pass occupies residues 65 to 85 (PLLAGSLLTSGIVLFSGTFYY). At 86-93 (QALSGDPT) the chain is on the cytoplasmic side. Residues 94 to 114 (LTKAAPYGGTLLILGWAAMAL) traverse the membrane as a helical segment.

Belongs to the TMEM256 family.

The protein resides in the cell membrane. This Bufo gargarizans (Asian toad) protein is Transmembrane protein 256 homolog.